The chain runs to 403 residues: uncharacterized protein (403 aa).

H81 contributes to the Zn(2+) binding site. Residue D83 is part of the active site. D114 provides a ligand contact to Zn(2+). E148 acts as the Proton acceptor in catalysis. Zn(2+) is bound by residues E149, E174, and H374.

Belongs to the peptidase M20A family. Zn(2+) is required as a cofactor. Co(2+) serves as cofactor.

This is an uncharacterized protein from Escherichia coli O157:H7.